Reading from the N-terminus, the 453-residue chain is D-aminoacyl-tRNA deacylase (453 aa).

Residues 428-453 form a disordered region; sequence VRADVALHERPRERVRRPSDDEGKGN.

It belongs to the DtdA deacylase family. As to quaternary structure, monomer. Zn(2+) is required as a cofactor.

The enzyme catalyses a D-aminoacyl-tRNA + H2O = a tRNA + a D-alpha-amino acid + H(+). It catalyses the reaction glycyl-tRNA(Ala) + H2O = tRNA(Ala) + glycine + H(+). Functionally, D-aminoacyl-tRNA deacylase with broad substrate specificity. By recycling D-aminoacyl-tRNA to D-amino acids and free tRNA molecules, this enzyme counteracts the toxicity associated with the formation of D-aminoacyl-tRNA entities in vivo. The protein is D-aminoacyl-tRNA deacylase of Halobacterium salinarum (strain ATCC 29341 / DSM 671 / R1).